Reading from the N-terminus, the 126-residue chain is Fluoride-specific ion channel FluC (126 aa).

Transmembrane regions (helical) follow at residues 3–23, 37–57, 68–88, and 101–121; these read PYLLLAVGTGGFVGAILRFLI, VGTLSVNVLGSFIIGFLALYF, LVITGMLGALTTFSTFSLETV, and TNITLNVFLCVVATMLGMMLF. Na(+) is bound by residues G75 and T78.

Belongs to the fluoride channel Fluc/FEX (TC 1.A.43) family.

The protein localises to the cell inner membrane. It catalyses the reaction fluoride(in) = fluoride(out). With respect to regulation, na(+) is not transported, but it plays an essential structural role and its presence is essential for fluoride channel function. In terms of biological role, fluoride-specific ion channel. Important for reducing fluoride concentration in the cell, thus reducing its toxicity. This chain is Fluoride-specific ion channel FluC, found in Sulfurovum sp. (strain NBC37-1).